We begin with the raw amino-acid sequence, 372 residues long: Probable arabinan endo-1,5-alpha-L-arabinosidase B (372 aa).

Residues 1–16 (MTVLVALFCLVTWTLC) form the signal peptide. Over residues 23–34 (STQGTQQPQQPE) the composition is skewed to low complexity. The segment at 23–52 (STQGTQQPQQPEKTPHPHPQPEDAFPPTHA) is disordered. The active-site Proton acceptor is Asp59. Asn120 carries an N-linked (GlcNAc...) asparagine glycan. Catalysis depends on Glu252, which acts as the Proton donor. The N-linked (GlcNAc...) asparagine glycan is linked to Asn363.

It belongs to the glycosyl hydrolase 43 family.

It is found in the secreted. It catalyses the reaction Endohydrolysis of (1-&gt;5)-alpha-arabinofuranosidic linkages in (1-&gt;5)-arabinans.. Its pathway is glycan metabolism; L-arabinan degradation. Its function is as follows. Endo-1,5-alpha-L-arabinanase involved in degradation of pectin. Its preferred substrate is linear 1,5-alpha-L-arabinan. The polypeptide is Probable arabinan endo-1,5-alpha-L-arabinosidase B (abnB) (Aspergillus fumigatus (strain ATCC MYA-4609 / CBS 101355 / FGSC A1100 / Af293) (Neosartorya fumigata)).